Consider the following 1163-residue polypeptide: DNA-directed RNA polymerase subunit beta' (1163 aa).

Residues cysteine 59, cysteine 61, cysteine 74, and cysteine 77 each contribute to the Zn(2+) site. Residues aspartate 449, aspartate 451, and aspartate 453 each coordinate Mg(2+). Positions 794, 868, 875, and 878 each coordinate Zn(2+).

The protein belongs to the RNA polymerase beta' chain family. The RNAP catalytic core consists of 2 alpha, 1 beta, 1 beta' and 1 omega subunit. When a sigma factor is associated with the core the holoenzyme is formed, which can initiate transcription. Mg(2+) serves as cofactor. The cofactor is Zn(2+).

It catalyses the reaction RNA(n) + a ribonucleoside 5'-triphosphate = RNA(n+1) + diphosphate. Functionally, DNA-dependent RNA polymerase catalyzes the transcription of DNA into RNA using the four ribonucleoside triphosphates as substrates. The chain is DNA-directed RNA polymerase subunit beta' from Caldicellulosiruptor saccharolyticus (strain ATCC 43494 / DSM 8903 / Tp8T 6331).